The following is a 281-amino-acid chain: NADPH-dependent 7-cyano-7-deazaguanine reductase (281 aa).

87–89 (VES) contributes to the substrate binding site. 89 to 90 (SK) provides a ligand contact to NADPH. Residue cysteine 188 is the Thioimide intermediate of the active site. The active-site Proton donor is aspartate 195. Residue 227-228 (HE) participates in substrate binding. Residue 256-257 (RG) coordinates NADPH.

Belongs to the GTP cyclohydrolase I family. QueF type 2 subfamily. As to quaternary structure, homodimer.

It localises to the cytoplasm. The enzyme catalyses 7-aminomethyl-7-carbaguanine + 2 NADP(+) = 7-cyano-7-deazaguanine + 2 NADPH + 3 H(+). Its pathway is tRNA modification; tRNA-queuosine biosynthesis. Its function is as follows. Catalyzes the NADPH-dependent reduction of 7-cyano-7-deazaguanine (preQ0) to 7-aminomethyl-7-deazaguanine (preQ1). The polypeptide is NADPH-dependent 7-cyano-7-deazaguanine reductase (Aliivibrio fischeri (strain MJ11) (Vibrio fischeri)).